We begin with the raw amino-acid sequence, 221 residues long: Type II secretion system protein J (221 aa).

Residues 1-15 constitute a propeptide, leader sequence; it reads MWRTNQVSSRQNMAG. Phe-16 is modified (N-methylphenylalanine). A helical membrane pass occupies residues 16–36; that stretch reads FTLIEVLVAIAIFASLSVGAY.

This sequence belongs to the GSP J family. In terms of assembly, type II secretion is composed of four main components: the outer membrane complex, the inner membrane complex, the cytoplasmic secretion ATPase and the periplasm-spanning pseudopilus. Interacts with core component epsG. Cleaved by prepilin peptidase. In terms of processing, methylated by prepilin peptidase at the amino group of the N-terminal phenylalanine once the leader sequence is cleaved by prepilin peptidase.

It localises to the cell inner membrane. Functionally, component of the type II secretion system required for the energy-dependent secretion of extracellular factors such as proteases and toxins from the periplasm. Part of the pseudopilus tip complex that is critical for the recognition and binding of secretion substrates. The sequence is that of Type II secretion system protein J (epsJ) from Vibrio cholerae serotype O1 (strain ATCC 39315 / El Tor Inaba N16961).